Consider the following 657-residue polypeptide: Translation factor GUF1, mitochondrial (657 aa).

The transit peptide at 1–39 (MRGCLQSVKWLTSAVRQSQSLTSSTRFPRRLFNTSTLHY) directs the protein to the mitochondrion. Residues 59 to 239 (ERFRNFCIVA…TVIEQVPAPV (181 aa)) form the tr-type G domain. GTP contacts are provided by residues 68 to 75 (AHVDHGKS), 132 to 136 (DTPGH), and 186 to 189 (NKVD).

The protein belongs to the TRAFAC class translation factor GTPase superfamily. Classic translation factor GTPase family. LepA subfamily.

The protein resides in the mitochondrion inner membrane. The enzyme catalyses GTP + H2O = GDP + phosphate + H(+). Functionally, promotes mitochondrial protein synthesis. May act as a fidelity factor of the translation reaction, by catalyzing a one-codon backward translocation of tRNAs on improperly translocated ribosomes. Binds to mitochondrial ribosomes in a GTP-dependent manner. This is Translation factor GUF1, mitochondrial from Blastomyces gilchristii (strain SLH14081) (Blastomyces dermatitidis).